A 194-amino-acid polypeptide reads, in one-letter code: Cupin-domain-containing oxidoreductase virC (194 aa).

One can recognise a Cupin type-2 domain in the interval 106 to 175 (IDFAPNVISP…GTLPGRMMWV (70 aa)).

It belongs to the virC family.

It functions in the pathway secondary metabolite biosynthesis. In terms of biological role, cupin-domain-containing oxidoreductase; part of the gene cluster that mediates the biosynthesis of virensols and trichoxide, fungal natural products that contain or are derived from a salicylaldehyde core. The pathway begins with the synthesis of the reduced chain in virensol C by the highly reducing polyketide synthase virA via condensation of one acetate and 8 malonate units. VirA has interesting programming rules since the first 2 ketides are fully reduced, the 3 following ketides undergo beta-dehydration, and the last 3 ketides are only reduced to beta-hydroxys to yield the trihydroxy portion. The production of aldehyde virensol C by virA alone is surprising, since virA does not contain a reductase (R) domain that is typically associated with reductive product release in HRPKS. The cupin-domain enzyme virC is involved in enhancing virA product turnover. The short-chain dehydrogenase virB then oxidizes the C-7 alcohol of virensol C to a ketone, yielding virensol D. Virensol D is further transformed to salicylaldehyde 5-deoxyaurocitrin by the short-chain dehydrogenase virD. VirD catalyzes the dehydrogenation of C-3 to form the beta-ketone aldehyde, which is followed by the generation of the nucleophilic C-2 that is required for the intramolecular aldol condensation between C-2 and C-7, itself followed by dehydration and aromatization which leads to salicylaldehyde 5-deoxyaurocitrin. While the dehydrogenation of virensol D is definitely catalyzed by virD, the aldol condensation and dehydration may be uncatalyzed or assisted by virD. The short chain dehydrogenase virG then converts salicylaldehyde 5-deoxyaurocitrin into virensol B which is further hydroxylated by the cytochrome P450 monooxygenase virE to yield the hydroquinone virensol A. VirI then may oxidize virensol A to form the quinone, while virH performs the epoxidation. Finally, the two remaining short-chain dehydrogenases, virK and virL, are probably responsible for reducing the ketones to the corresponding alcohols to furnish the epoxycyclohexanol structure in trichoxide. The chain is Cupin-domain-containing oxidoreductase virC from Hypocrea virens (strain Gv29-8 / FGSC 10586) (Gliocladium virens).